Consider the following 407-residue polypeptide: MRQLLPGDTVWRNIRLATMDPQRQAPYGLVDNQALIVREGHICDIVPETQLPVSGDNIHDMQGRLVTPGLIDCHTHLVFAGNRAAEWEQRLNGASYQHISAQGGGINATVSATRACAEETLYQLARERMMRLASEGVTLLEIKSGYGLELATEEKLLRVAAKLAAENAIDISPTLLAAHATPAEYRDDPDGYITLVCETMIPQLWKKGLFDAVDLFCESVGFNVAQSERVLQTAKALGIPVKGHVEQLSLLGGAQLVSRYQGLSADHIEYLDEAGVAAMRDGGTVGVLLPGAFYFLRETQHPPVELLRRYQVPVAVASDFNPGTSPFCSLHLAMNMACVQFGLTPEEAWAGVTRHAARALGRQATHGQLRAGYRADFVVWDAEQPVEIVYEPGRNPLYQRVYRGKIS.

The Fe(3+) site is built by His-74 and His-76. His-74 and His-76 together coordinate Zn(2+). 3 residues coordinate 4-imidazolone-5-propanoate: Arg-83, Tyr-146, and His-179. Tyr-146 contributes to the N-formimidoyl-L-glutamate binding site. A Fe(3+)-binding site is contributed by His-244. Residue His-244 participates in Zn(2+) binding. Gln-247 is a 4-imidazolone-5-propanoate binding site. Fe(3+) is bound at residue Asp-319. Residue Asp-319 participates in Zn(2+) binding. Residues Asn-321 and Gly-323 each coordinate N-formimidoyl-L-glutamate. Thr-324 contributes to the 4-imidazolone-5-propanoate binding site.

The protein belongs to the metallo-dependent hydrolases superfamily. HutI family. Requires Zn(2+) as cofactor. The cofactor is Fe(3+).

Its subcellular location is the cytoplasm. It carries out the reaction 4-imidazolone-5-propanoate + H2O = N-formimidoyl-L-glutamate. It participates in amino-acid degradation; L-histidine degradation into L-glutamate; N-formimidoyl-L-glutamate from L-histidine: step 3/3. Its function is as follows. Catalyzes the hydrolytic cleavage of the carbon-nitrogen bond in imidazolone-5-propanoate to yield N-formimidoyl-L-glutamate. It is the third step in the universal histidine degradation pathway. The sequence is that of Imidazolonepropionase from Salmonella paratyphi A (strain ATCC 9150 / SARB42).